Reading from the N-terminus, the 908-residue chain is Metabotropic glutamate receptor 8 (908 aa).

Positions 1-33 are cleaved as a signal peptide; that stretch reads MVCEGKRLASCPCFFLLTAKFYWILTMMQRTHS. The Extracellular segment spans residues 34 to 583; that stretch reads QEYAHSIRVD…IIKLEWHSPW (550 aa). An intrachain disulfide couples cysteine 64 to cysteine 106. A glycan (N-linked (GlcNAc...) asparagine) is linked at asparagine 95. L-glutamate contacts are provided by residues serine 156, 177-179, and tyrosine 227; that span reads AST. Intrachain disulfides connect cysteine 246-cysteine 534, cysteine 369-cysteine 384, cysteine 424-cysteine 431, cysteine 516-cysteine 535, cysteine 520-cysteine 538, cysteine 541-cysteine 553, and cysteine 556-cysteine 569. N-linked (GlcNAc...) asparagine glycosylation is present at asparagine 298. Aspartate 309 serves as a coordination point for L-glutamate. Lysine 401 is a binding site for L-glutamate. Asparagine 452 and asparagine 480 each carry an N-linked (GlcNAc...) asparagine glycan. Asparagine 565 is a glycosylation site (N-linked (GlcNAc...) asparagine). Residues 584-608 traverse the membrane as a helical segment; it reads AVVPVFIAILGIIATTFVIVTFVRY. The Cytoplasmic segment spans residues 609-620; sequence NDTPIVRASGRE. A helical membrane pass occupies residues 621–641; sequence LSYVLLTGIFLCYSITFLMIA. Residues 642–647 are Extracellular-facing; it reads APDTII. A helical transmembrane segment spans residues 648–668; that stretch reads CSFRRIFLGLGMCFSYAALLT. The Cytoplasmic portion of the chain corresponds to 669–695; the sequence is KTNRIHRIFEQGKKSVTAPKFISPASQ. The chain crosses the membrane as a helical span at residues 696-716; the sequence is LVITFSLISVQLLGVFVWFVV. Over 717–746 the chain is Extracellular; it reads DPPHTIIDYGEQRTLDPENARGVLKCDISD. The chain crosses the membrane as a helical span at residues 747-768; that stretch reads LSLICSLGYSILLMVTCTVYAI. The Cytoplasmic segment spans residues 769–781; that stretch reads KTRGVPETFNEAK. The chain crosses the membrane as a helical span at residues 782-803; sequence PIGFTMYTTCIIWLAFIPIFFG. At 804–818 the chain is on the extracellular side; sequence TAQSAEKMYIQTTTL. The helical transmembrane segment at 819-843 threads the bilayer; that stretch reads TVSMSLSASVSLGMLYMPKVYIIIF. Topologically, residues 844 to 908 are cytoplasmic; it reads HPEQNVQKRK…TYISYSNHSI (65 aa). Residue lysine 882 forms a Glycyl lysine isopeptide (Lys-Gly) (interchain with G-Cter in SUMO1) linkage.

This sequence belongs to the G-protein coupled receptor 3 family. Interacts with PICK1. Prominent expression in olfactory bulb, pontine gray, lateral reticular nucleus of the thalamus, and piriform cortex. Less abundant expression incerebral cortex, hippocampus, cerebellum, and mammillary body.

The protein resides in the cell membrane. G-protein coupled receptor for glutamate. Ligand binding causes a conformation change that triggers signaling via guanine nucleotide-binding proteins (G proteins) and modulates the activity of down-stream effectors. Signaling inhibits adenylate cyclase activity. In Rattus norvegicus (Rat), this protein is Metabotropic glutamate receptor 8 (Grm8).